Reading from the N-terminus, the 335-residue chain is UPF0353 protein MUL_1490 (335 aa).

Transmembrane regions (helical) follow at residues 18–38 and 67–87; these read WFFL…VLQL and IPAM…AGPT. The region spanning 98–298 is the VWFA domain; it reads VVMLVIDVSQ…SVYVSLQQQI (201 aa). A helical membrane pass occupies residues 309–329; it reads MGWLRLGALVLVAAALAALLI.

The protein belongs to the UPF0353 family.

Its subcellular location is the cell membrane. In Mycobacterium ulcerans (strain Agy99), this protein is UPF0353 protein MUL_1490.